We begin with the raw amino-acid sequence, 338 residues long: Sporulation-specific protein 4 (338 aa).

Residues 14–37 form a disordered region; that stretch reads QEENKNFLHKNTNEPNEMEQSQTQ. Positions 22–37 are enriched in polar residues; sequence HKNTNEPNEMEQSQTQ.

Not essential for sporulation. Might be a component of the cell wall. In Saccharomyces cerevisiae (strain ATCC 204508 / S288c) (Baker's yeast), this protein is Sporulation-specific protein 4 (SPS4).